The following is a 272-amino-acid chain: MARDRRDYYYHQAKEEGYRSRASFKLKQINEKHNVIKRGDSVVDLGAAPGGWLQVAKQLSGGKVLGVDLQRIAPIEGVETIQGDINADSTIKKIIRAVGEKGADVVLCDAAPNLSGNWSYDHARSIELTTSALECAKKILKPKGNFVVKVFQGDMFNDYLEKVRDNFVHVKAYSPQASRSQSAEIYVIGKKFLTAPLRRGDKFVVDIEKLGSGGDGAVLIEGFVVFVKEVEVGEKVRIKIADVKPNFAFADVEERLEKAEDSENLGNSEKAE.

G50, W52, D68, D84, and D109 together coordinate S-adenosyl-L-methionine. K149 acts as the Proton acceptor in catalysis. The 59-residue stretch at P196–E254 folds into the TRAM domain.

The protein belongs to the class I-like SAM-binding methyltransferase superfamily. RNA methyltransferase RlmE family.

It is found in the cytoplasm. The catalysed reaction is uridine(2552) in 23S rRNA + S-adenosyl-L-methionine = 2'-O-methyluridine(2552) in 23S rRNA + S-adenosyl-L-homocysteine + H(+). In terms of biological role, specifically methylates the uridine in position 2552 of 23S rRNA at the 2'-O position of the ribose in the fully assembled 50S ribosomal subunit. In Methanosarcina acetivorans (strain ATCC 35395 / DSM 2834 / JCM 12185 / C2A), this protein is Ribosomal RNA large subunit methyltransferase E.